The sequence spans 136 residues: Large ribosomal subunit protein uL16 (136 aa).

It belongs to the universal ribosomal protein uL16 family. In terms of assembly, part of the 50S ribosomal subunit.

Binds 23S rRNA and is also seen to make contacts with the A and possibly P site tRNAs. In Pelagibacter ubique (strain HTCC1062), this protein is Large ribosomal subunit protein uL16.